We begin with the raw amino-acid sequence, 1374 residues long: Y' element ATP-dependent helicase YLL067C (1374 aa).

The interval 321–345 is disordered; sequence AGEAASSDHDQKISRVTRKRPREPK. The Helicase ATP-binding domain occupies 375–552; sequence EIYMADTPSV…LQRIGLTGLA (178 aa). 388–395 contributes to the ATP binding site; it reads APPGYGKT. Positions 498 to 501 match the DEAH box motif; the sequence is DEFH. Residues 609–758 enclose the Helicase C-terminal domain; that stretch reads KLLLALFEIE…EFYGLESKKG (150 aa). The segment covering 832-1011 has biased composition (low complexity); that stretch reads ANASTNATTN…ATTTESTNAS (180 aa). Residues 832–1035 are disordered; it reads ANASTNATTN…RFHPVTDINK (204 aa). Over residues 1012–1035 the composition is skewed to basic and acidic residues; the sequence is AKEDANKDGNAEDNRFHPVTDINK.

This sequence belongs to the helicase family. Yeast subtelomeric Y' repeat subfamily.

Functionally, catalyzes DNA unwinding and is involved in telomerase-independent telomere maintenance. This is Y' element ATP-dependent helicase YLL067C from Saccharomyces cerevisiae (strain ATCC 204508 / S288c) (Baker's yeast).